Here is a 340-residue protein sequence, read N- to C-terminus: UDP-3-O-acylglucosamine N-acyltransferase (340 aa).

His-238 serves as the catalytic Proton acceptor.

Belongs to the transferase hexapeptide repeat family. LpxD subfamily. In terms of assembly, homotrimer.

The catalysed reaction is a UDP-3-O-[(3R)-3-hydroxyacyl]-alpha-D-glucosamine + a (3R)-hydroxyacyl-[ACP] = a UDP-2-N,3-O-bis[(3R)-3-hydroxyacyl]-alpha-D-glucosamine + holo-[ACP] + H(+). It participates in bacterial outer membrane biogenesis; LPS lipid A biosynthesis. In terms of biological role, catalyzes the N-acylation of UDP-3-O-acylglucosamine using 3-hydroxyacyl-ACP as the acyl donor. Is involved in the biosynthesis of lipid A, a phosphorylated glycolipid that anchors the lipopolysaccharide to the outer membrane of the cell. The chain is UDP-3-O-acylglucosamine N-acyltransferase from Shewanella denitrificans (strain OS217 / ATCC BAA-1090 / DSM 15013).